The chain runs to 692 residues: Meiotic sister-chromatid recombination protein 6, mitochondrial (692 aa).

Residues 1 to 30 constitute a mitochondrion transit peptide; sequence MLSHNALRAFDCSKVIISRRCLTSSTSIYQ.

It localises to the mitochondrion. Functionally, may be involved in the control of meiotic sister-chromatid recombination. The protein is Meiotic sister-chromatid recombination protein 6, mitochondrial (MSC6) of Saccharomyces cerevisiae (strain ATCC 204508 / S288c) (Baker's yeast).